The sequence spans 157 residues: Crossover junction endodeoxyribonuclease RuvC (157 aa).

Active-site residues include Asp-7, Glu-70, and Asp-142. Asp-7, Glu-70, and Asp-142 together coordinate Mg(2+).

It belongs to the RuvC family. As to quaternary structure, homodimer which binds Holliday junction (HJ) DNA. The HJ becomes 2-fold symmetrical on binding to RuvC with unstacked arms; it has a different conformation from HJ DNA in complex with RuvA. In the full resolvosome a probable DNA-RuvA(4)-RuvB(12)-RuvC(2) complex forms which resolves the HJ. Mg(2+) is required as a cofactor.

The protein localises to the cytoplasm. It carries out the reaction Endonucleolytic cleavage at a junction such as a reciprocal single-stranded crossover between two homologous DNA duplexes (Holliday junction).. Functionally, the RuvA-RuvB-RuvC complex processes Holliday junction (HJ) DNA during genetic recombination and DNA repair. Endonuclease that resolves HJ intermediates. Cleaves cruciform DNA by making single-stranded nicks across the HJ at symmetrical positions within the homologous arms, yielding a 5'-phosphate and a 3'-hydroxyl group; requires a central core of homology in the junction. The consensus cleavage sequence is 5'-(A/T)TT(C/G)-3'. Cleavage occurs on the 3'-side of the TT dinucleotide at the point of strand exchange. HJ branch migration catalyzed by RuvA-RuvB allows RuvC to scan DNA until it finds its consensus sequence, where it cleaves and resolves the cruciform DNA. The sequence is that of Crossover junction endodeoxyribonuclease RuvC from Synechococcus sp. (strain RCC307).